A 965-amino-acid polypeptide reads, in one-letter code: Phosphatidylethanolamine N-methyltransferase (965 aa).

Topologically, residues 1–82 are lumenal; the sequence is MDRGLSTGTN…SPSEPKNLSD (82 aa). Residues 34 to 54 form a disordered region; that stretch reads PTVTNASNGKDKAGKTFGRTP. The helical transmembrane segment at 83–103 threads the bilayer; it reads LVVLTILAGHIFLLWILPSGA. The Cytoplasmic segment spans residues 104-106; the sequence is KIP. Residues 107-127 form a helical membrane-spanning segment; that stretch reads VFAVIYLFWRSCYNAGIGWLL. Topologically, residues 128–192 are lumenal; it reads HNQSHHKTLV…EYNTWLVFRR (65 aa). Residues 193-213 traverse the membrane as a helical segment; that stretch reads LVDLILMCDFASYCLFAIACS. Residues 214-220 are Cytoplasmic-facing; it reads RHPANES. Residues 221–241 traverse the membrane as a helical segment; it reads VLMTVIRWTSGIALVLFNLWV. Over 242 to 274 the chain is Lumenal; it reads KLDAHRVVKDYAWYWGDFFYLIDQELTFDGVFE. Residues 275–295 traverse the membrane as a helical segment; that stretch reads MAPHPMYSVGYAGYYGISLMA. Residues 296–297 are Cytoplasmic-facing; the sequence is AS. A helical membrane pass occupies residues 298-318; it reads YKVLFISIIAHAAQFAFLVLV. The Lumenal portion of the chain corresponds to 319–394; sequence ENPHIDKTYN…LDLHRITDTS (76 aa). The disordered stretch occupies residues 326-368; sequence TYNPPPPRKRTITEHDAASQRSQSPDTPNAPSVSEENVPNATT. Over residues 344-368 the composition is skewed to polar residues; it reads SQRSQSPDTPNAPSVSEENVPNATT. A helical membrane pass occupies residues 395–415; sequence SILVQFLMFSLTVLTPSTPWY. Residue Gln416 is a topological domain, cytoplasmic. A helical transmembrane segment spans residues 417–437; that stretch reads FLFVANAAIWRLWYSVGIGYL. Over 438–470 the chain is Lumenal; the sequence is LNRQSNCKSWTRHFVKYGETPHEAWNQWKGTYH. The helical transmembrane segment at 471–491 threads the bilayer; sequence LSMVMCYASFISAVWKMYTLP. Over 492-503 the chain is Cytoplasmic; the sequence is SNWGYGLAILRH. The chain crosses the membrane as a helical span at residues 504 to 524; it reads VLGAGLISLQIWTSVSIYESL. The Lumenal portion of the chain corresponds to 525 to 559; sequence GEFGWFYGDFFFDESPKLTYNGIYRFLNNPERVLG. The helical transmembrane segment at 560 to 580 threads the bilayer; that stretch reads LAGVWGAVLITASGTVAFLAF. The Cytoplasmic portion of the chain corresponds to 581 to 965; it reads LSHILSLGFI…GATTPTESKE (385 aa).

This sequence belongs to the class VI-like SAM-binding methyltransferase superfamily. CHO2 family.

It is found in the endoplasmic reticulum membrane. The enzyme catalyses a 1,2-diacyl-sn-glycero-3-phosphoethanolamine + S-adenosyl-L-methionine = a 1,2-diacyl-sn-glycero-3-phospho-N-methylethanolamine + S-adenosyl-L-homocysteine + H(+). It participates in phospholipid metabolism; phosphatidylcholine biosynthesis. In terms of biological role, catalyzes the first step of the methylation pathway of phosphatidylcholine biosynthesis, the SAM-dependent methylation of phosphatidylethanolamine (PE) to phosphatidylmonomethylethanolamine (PMME). The chain is Phosphatidylethanolamine N-methyltransferase from Emericella nidulans (strain FGSC A4 / ATCC 38163 / CBS 112.46 / NRRL 194 / M139) (Aspergillus nidulans).